A 128-amino-acid chain; its full sequence is MPTINQLVRKERKKVLEKSKSPALKNCPQRRGVCTRVYTTTPKKPNSALRKVAKVRLTSGFEVISYIGGEGHNLQEHSIVLVRGGRVKDLPGVKYHIVRGALDTAGVAKRTVSRSKYGAKRPKAGAAK.

D89 carries the post-translational modification 3-methylthioaspartic acid.

It belongs to the universal ribosomal protein uS12 family. In terms of assembly, part of the 30S ribosomal subunit. Contacts proteins S8 and S17. May interact with IF1 in the 30S initiation complex.

With S4 and S5 plays an important role in translational accuracy. Its function is as follows. Interacts with and stabilizes bases of the 16S rRNA that are involved in tRNA selection in the A site and with the mRNA backbone. Located at the interface of the 30S and 50S subunits, it traverses the body of the 30S subunit contacting proteins on the other side and probably holding the rRNA structure together. The combined cluster of proteins S8, S12 and S17 appears to hold together the shoulder and platform of the 30S subunit. In Campylobacter jejuni subsp. doylei (strain ATCC BAA-1458 / RM4099 / 269.97), this protein is Small ribosomal subunit protein uS12.